A 473-amino-acid chain; its full sequence is ATP synthase subunit beta (473 aa).

158-165 contacts ATP; it reads GGAGVGKT.

Belongs to the ATPase alpha/beta chains family. As to quaternary structure, F-type ATPases have 2 components, CF(1) - the catalytic core - and CF(0) - the membrane proton channel. CF(1) has five subunits: alpha(3), beta(3), gamma(1), delta(1), epsilon(1). CF(0) has three main subunits: a(1), b(2) and c(9-12). The alpha and beta chains form an alternating ring which encloses part of the gamma chain. CF(1) is attached to CF(0) by a central stalk formed by the gamma and epsilon chains, while a peripheral stalk is formed by the delta and b chains.

Its subcellular location is the cell membrane. The enzyme catalyses ATP + H2O + 4 H(+)(in) = ADP + phosphate + 5 H(+)(out). Its function is as follows. Produces ATP from ADP in the presence of a proton gradient across the membrane. The catalytic sites are hosted primarily by the beta subunits. This Geobacillus thermodenitrificans (strain NG80-2) protein is ATP synthase subunit beta.